Here is a 210-residue protein sequence, read N- to C-terminus: Na(+)-translocating NADH-quinone reductase subunit D (210 aa).

The next 5 membrane-spanning stretches (helical) occupy residues Phe42–Ile62, Ile72–Ala92, Val103–Met123, Phe131–Phe151, and Asn178–Ile198.

It belongs to the NqrDE/RnfAE family. As to quaternary structure, composed of six subunits; NqrA, NqrB, NqrC, NqrD, NqrE and NqrF.

Its subcellular location is the cell inner membrane. It carries out the reaction a ubiquinone + n Na(+)(in) + NADH + H(+) = a ubiquinol + n Na(+)(out) + NAD(+). Its function is as follows. NQR complex catalyzes the reduction of ubiquinone-1 to ubiquinol by two successive reactions, coupled with the transport of Na(+) ions from the cytoplasm to the periplasm. NqrA to NqrE are probably involved in the second step, the conversion of ubisemiquinone to ubiquinol. The polypeptide is Na(+)-translocating NADH-quinone reductase subunit D (Aliivibrio fischeri (strain ATCC 700601 / ES114) (Vibrio fischeri)).